The chain runs to 260 residues: Thiazole synthase (260 aa).

Residue K96 is the Schiff-base intermediate with DXP of the active site. Residues G157, 183–184, and 205–206 contribute to the 1-deoxy-D-xylulose 5-phosphate site; these read AG and AS.

Belongs to the ThiG family. In terms of assembly, homotetramer. Forms heterodimers with either ThiH or ThiS.

It is found in the cytoplasm. It carries out the reaction [ThiS sulfur-carrier protein]-C-terminal-Gly-aminoethanethioate + 2-iminoacetate + 1-deoxy-D-xylulose 5-phosphate = [ThiS sulfur-carrier protein]-C-terminal Gly-Gly + 2-[(2R,5Z)-2-carboxy-4-methylthiazol-5(2H)-ylidene]ethyl phosphate + 2 H2O + H(+). It participates in cofactor biosynthesis; thiamine diphosphate biosynthesis. In terms of biological role, catalyzes the rearrangement of 1-deoxy-D-xylulose 5-phosphate (DXP) to produce the thiazole phosphate moiety of thiamine. Sulfur is provided by the thiocarboxylate moiety of the carrier protein ThiS. In vitro, sulfur can be provided by H(2)S. The polypeptide is Thiazole synthase (Corynebacterium glutamicum (strain R)).